Consider the following 497-residue polypeptide: UDP-N-acetylmuramoyl-L-alanyl-D-glutamate--2,6-diaminopimelate ligase (497 aa).

Residue Ser29 coordinates UDP-N-acetyl-alpha-D-muramoyl-L-alanyl-D-glutamate. Residue 116–122 (GTNGKTT) coordinates ATP. UDP-N-acetyl-alpha-D-muramoyl-L-alanyl-D-glutamate is bound by residues Asn157, 158 to 159 (TT), Ser185, Gln191, and Arg193. N6-carboxylysine is present on Lys225. Residues Arg392, 416–419 (DNPR), Gly467, and Glu471 each bind meso-2,6-diaminopimelate. The short motif at 416-419 (DNPR) is the Meso-diaminopimelate recognition motif element.

Belongs to the MurCDEF family. MurE subfamily. Requires Mg(2+) as cofactor. Post-translationally, carboxylation is probably crucial for Mg(2+) binding and, consequently, for the gamma-phosphate positioning of ATP.

Its subcellular location is the cytoplasm. The catalysed reaction is UDP-N-acetyl-alpha-D-muramoyl-L-alanyl-D-glutamate + meso-2,6-diaminopimelate + ATP = UDP-N-acetyl-alpha-D-muramoyl-L-alanyl-gamma-D-glutamyl-meso-2,6-diaminopimelate + ADP + phosphate + H(+). The protein operates within cell wall biogenesis; peptidoglycan biosynthesis. Catalyzes the addition of meso-diaminopimelic acid to the nucleotide precursor UDP-N-acetylmuramoyl-L-alanyl-D-glutamate (UMAG) in the biosynthesis of bacterial cell-wall peptidoglycan. The sequence is that of UDP-N-acetylmuramoyl-L-alanyl-D-glutamate--2,6-diaminopimelate ligase from Buchnera aphidicola subsp. Acyrthosiphon pisum (strain APS) (Acyrthosiphon pisum symbiotic bacterium).